A 97-amino-acid polypeptide reads, in one-letter code: MDPKTSVVPPALHLVDPQIQLTIIRMEDAVVHGQSNAVPKVYPIILRLGSQLSLSMARRNLDSLEARAFQSTPIVVKMTKLATTEELPDEFVVVTAK.

One can recognise a 9b domain in the interval 8–97; the sequence is VPPALHLVDP…PDEFVVVTAK (90 aa).

As to quaternary structure, homodimer.

The protein resides in the host cytoplasmic vesicle membrane. Its subcellular location is the host cytoplasm. In Bat coronavirus 279/2005 (BtCoV), this protein is Protein 9b.